The chain runs to 284 residues: Shikimate kinase (284 aa).

85 to 95 (PLAAGLKSSSA) provides a ligand contact to ATP.

This sequence belongs to the GHMP kinase family. Archaeal shikimate kinase subfamily.

Its subcellular location is the cytoplasm. It carries out the reaction shikimate + ATP = 3-phosphoshikimate + ADP + H(+). The protein operates within metabolic intermediate biosynthesis; chorismate biosynthesis; chorismate from D-erythrose 4-phosphate and phosphoenolpyruvate: step 5/7. The chain is Shikimate kinase from Halobacterium salinarum (strain ATCC 29341 / DSM 671 / R1).